A 316-amino-acid polypeptide reads, in one-letter code: tRNA dimethylallyltransferase (316 aa).

12 to 19 serves as a coordination point for ATP; sequence GPTASGKT. 14 to 19 contacts substrate; it reads TASGKT. Interaction with substrate tRNA stretches follow at residues 37 to 40 and 161 to 165; these read DSAL and QRILR.

It belongs to the IPP transferase family. As to quaternary structure, monomer. Mg(2+) is required as a cofactor.

It carries out the reaction adenosine(37) in tRNA + dimethylallyl diphosphate = N(6)-dimethylallyladenosine(37) in tRNA + diphosphate. Functionally, catalyzes the transfer of a dimethylallyl group onto the adenine at position 37 in tRNAs that read codons beginning with uridine, leading to the formation of N6-(dimethylallyl)adenosine (i(6)A). In Idiomarina loihiensis (strain ATCC BAA-735 / DSM 15497 / L2-TR), this protein is tRNA dimethylallyltransferase.